The chain runs to 437 residues: RING finger protein 150 (437 aa).

Positions 1-34 are cleaved as a signal peptide; the sequence is MTMSLIQACRSLALSTWLLSFCFVHLLCLDFTVA. At 35–207 the chain is on the extracellular side; the sequence is EKEEWYTAFV…NLQKYVSRTS (173 aa). Residues Asn-45, Asn-124, Asn-152, and Asn-185 are each glycosylated (N-linked (GlcNAc...) asparagine). The 103-residue stretch at 80-182 folds into the PA domain; sequence SPKQDARGEV…PKGKEIVSLL (103 aa). The helical transmembrane segment at 208–228 threads the bilayer; sequence VVFVSISFIVLMIISLAWLVF. Topologically, residues 229–437 are cytoplasmic; the sequence is YYIQRFRYAN…TDQDCEEVKS (209 aa). The RING-type; atypical zinc finger occupies 277–318; it reads CAVCIEGYKPNDVVRILPCRHLFHKSCVDPWLLDHRTCPMCK.

It localises to the membrane. This Mus musculus (Mouse) protein is RING finger protein 150 (Rnf150).